Here is a 269-residue protein sequence, read N- to C-terminus: Aquaporin-1 (269 aa).

Residues 1 to 11 (MASEFKKKLFW) are Cytoplasmic-facing. The helical transmembrane segment at 12–29 (RAVVAEFLAMTLFVFISI) threads the bilayer. Residues 30–46 (GSALGFKYPVGNNQTAV) lie on the Extracellular side of the membrane. N-linked (GlcNAc...) asparagine glycosylation occurs at Asn-42. The chain crosses the membrane as a helical span at residues 47–65 (QDNVKVSLAFGLSIATLAQ). Residues 66–68 (SVG) are Cytoplasmic-facing. The stretch at 69–82 (HISGAHLNPAVTLG) is an intramembrane region. The NPA 1 signature appears at 76-78 (NPA). The Cytoplasmic portion of the chain corresponds to 83–90 (LLLSCQIS). Residues 91–109 (IFRALMYIIAQCVGAIVAT) traverse the membrane as a helical segment. Residues 110-133 (AILSGITSSLPGNSLGRNDLADGV) lie on the Extracellular side of the membrane. Residues 134 to 153 (NSGQGLGIEIIGTLQLVLCV) form a helical membrane-spanning segment. Over 154–163 (LATTDRRRRD) the chain is Cytoplasmic. The chain crosses the membrane as a helical span at residues 164–181 (LGGSAPLAIGLSVALGHL). Residues 182–186 (LAIDY) lie on the Extracellular side of the membrane. Residues 187 to 199 (TGCGINPARSFGS) lie within the membrane without spanning it. An NPA 2 motif is present at residues 192–194 (NPA). Residues 200–206 (AVITHNF) lie on the Extracellular side of the membrane. The N-linked (GlcNAc...) asparagine glycan is linked to Asn-205. The helical transmembrane segment at 207–224 (SNHWIFWVGPFIGGALAV) threads the bilayer. Residues 225-269 (LIYDFILAPRSSDFTDRVKVWTSGQVEEYDLDADDINSRVEMKPK) are Cytoplasmic-facing. At Ser-247 the chain carries Phosphoserine. A Phosphotyrosine modification is found at Tyr-253. A Phosphoserine modification is found at Ser-262.

This sequence belongs to the MIP/aquaporin (TC 1.A.8) family. As to quaternary structure, homotetramer; each monomer provides an independent water pore. Component of the ankyrin-1 complex in the erythrocyte, composed of ANK1, RHCE, RHAG, SLC4A1, EPB42, GYPA, GYPB and AQP1. Interacts with EPHB2; involved in endolymph production in the inner ear. Identified in a complex with STOM. Interacts (via the N-terminal) with ANK1 (via ANK 1-5 repeats). Interacts (via the C-terminal) with EPB42.

It localises to the cell membrane. It carries out the reaction H2O(in) = H2O(out). It catalyses the reaction nitric oxide(out) = nitric oxide(in). The enzyme catalyses CO2(out) = CO2(in). The catalysed reaction is glycerol(in) = glycerol(out). It carries out the reaction H2O2(out) = H2O2(in). It catalyses the reaction K(+)(in) = K(+)(out). The enzyme catalyses Na(+)(in) = Na(+)(out). Functionally, forms a water channel that facilitates the transport of water across cell membranes, playing a crucial role in water homeostasis in various tissues. Could also be permeable to small solutes including hydrogen peroxide, glycerol and gases such as amonnia (NH3), nitric oxide (NO) and carbon dioxide (CO2). Recruited to the ankyrin-1 complex, a multiprotein complex of the erythrocyte membrane, it could be part of a CO2 metabolon, linking facilitated diffusion of CO2 across the membrane, anion exchange of Cl(-)/HCO3(-) and interconversion of dissolved CO2 and carbonic acid in the cytosol. In vitro, it shows non-selective gated cation channel activity and may be permeable to cations like K(+) and Na(+) in vivo. In Pongo abelii (Sumatran orangutan), this protein is Aquaporin-1.